Here is a 218-residue protein sequence, read N- to C-terminus: Probable WRKY transcription factor 12 (218 aa).

Residues 49 to 63 (SSLSSPSFPIHNSSS) are compositionally biased toward low complexity. 2 disordered regions span residues 49–120 (SSLS…DMKN) and 199–218 (HNHI…LSSF). Over residues 64–77 (TTTTHAPLGFSNNL) the composition is skewed to polar residues. The span at 105 to 116 (SNSWWRSNSGSG) shows a compositional bias: low complexity. A DNA-binding region (WRKY) is located at residues 139–204 (SDVDVLDDGY…YEGRHNHIPS (66 aa)).

This sequence belongs to the WRKY group II-c family.

It localises to the nucleus. Its function is as follows. Transcription factor. Interacts specifically with the W box (5'-(T)TGAC[CT]-3'), a frequently occurring elicitor-responsive cis-acting element. The sequence is that of Probable WRKY transcription factor 12 (WRKY12) from Arabidopsis thaliana (Mouse-ear cress).